The following is a 246-amino-acid chain: 1-(5-phosphoribosyl)-5-[(5-phosphoribosylamino)methylideneamino] imidazole-4-carboxamide isomerase (246 aa).

The active-site Proton acceptor is the D10. Catalysis depends on D135, which acts as the Proton donor.

Belongs to the HisA/HisF family.

It localises to the cytoplasm. It carries out the reaction 1-(5-phospho-beta-D-ribosyl)-5-[(5-phospho-beta-D-ribosylamino)methylideneamino]imidazole-4-carboxamide = 5-[(5-phospho-1-deoxy-D-ribulos-1-ylimino)methylamino]-1-(5-phospho-beta-D-ribosyl)imidazole-4-carboxamide. It participates in amino-acid biosynthesis; L-histidine biosynthesis; L-histidine from 5-phospho-alpha-D-ribose 1-diphosphate: step 4/9. This Methanococcoides burtonii (strain DSM 6242 / NBRC 107633 / OCM 468 / ACE-M) protein is 1-(5-phosphoribosyl)-5-[(5-phosphoribosylamino)methylideneamino] imidazole-4-carboxamide isomerase.